A 324-amino-acid chain; its full sequence is NADH-cytochrome b5 reductase 2 (324 aa).

The chain crosses the membrane as a helical span at residues 31 to 47; it reads IPLIGGITLAAGAGYYY. One can recognise an FAD-binding FR-type domain in the interval 70–178; sequence QGWIGLKLAH…KGPLPKYPWE (109 aa). 181-216 contributes to the FAD binding site; the sequence is KHDHICLIAGGTGITPMYQLVRKIFSNPEDKTKVTL.

It belongs to the flavoprotein pyridine nucleotide cytochrome reductase family. Requires FAD as cofactor.

The protein localises to the mitochondrion outer membrane. It catalyses the reaction 2 Fe(III)-[cytochrome b5] + NADH = 2 Fe(II)-[cytochrome b5] + NAD(+) + H(+). Functionally, may mediate the reduction of outer membrane cytochrome b5. The polypeptide is NADH-cytochrome b5 reductase 2 (MCR1) (Ajellomyces capsulatus (strain NAm1 / WU24) (Darling's disease fungus)).